We begin with the raw amino-acid sequence, 1438 residues long: DNA polymerase III PolC-type (1438 aa).

Residues 422–578 (YVVFDVETTG…YDTEATAYIF (157 aa)) enclose the Exonuclease domain.

Belongs to the DNA polymerase type-C family. PolC subfamily.

The protein localises to the cytoplasm. The enzyme catalyses DNA(n) + a 2'-deoxyribonucleoside 5'-triphosphate = DNA(n+1) + diphosphate. In terms of biological role, required for replicative DNA synthesis. This DNA polymerase also exhibits 3' to 5' exonuclease activity. This Staphylococcus epidermidis (strain ATCC 35984 / DSM 28319 / BCRC 17069 / CCUG 31568 / BM 3577 / RP62A) protein is DNA polymerase III PolC-type.